The chain runs to 258 residues: Thiazole synthase (258 aa).

Catalysis depends on Lys-100, which acts as the Schiff-base intermediate with DXP. Residues Gly-161, 187–188, and 209–210 each bind 1-deoxy-D-xylulose 5-phosphate; these read AG and NT.

This sequence belongs to the ThiG family. As to quaternary structure, homotetramer. Forms heterodimers with either ThiH or ThiS.

The protein localises to the cytoplasm. The enzyme catalyses [ThiS sulfur-carrier protein]-C-terminal-Gly-aminoethanethioate + 2-iminoacetate + 1-deoxy-D-xylulose 5-phosphate = [ThiS sulfur-carrier protein]-C-terminal Gly-Gly + 2-[(2R,5Z)-2-carboxy-4-methylthiazol-5(2H)-ylidene]ethyl phosphate + 2 H2O + H(+). Its pathway is cofactor biosynthesis; thiamine diphosphate biosynthesis. Catalyzes the rearrangement of 1-deoxy-D-xylulose 5-phosphate (DXP) to produce the thiazole phosphate moiety of thiamine. Sulfur is provided by the thiocarboxylate moiety of the carrier protein ThiS. In vitro, sulfur can be provided by H(2)S. This is Thiazole synthase from Campylobacter jejuni subsp. jejuni serotype O:23/36 (strain 81-176).